Reading from the N-terminus, the 455-residue chain is Nucleoside-triphosphatase (455 aa).

The Proton acceptor role is filled by Glu-168.

Belongs to the GDA1/CD39 NTPase family.

Its subcellular location is the nucleus. The catalysed reaction is a ribonucleoside 5'-triphosphate + H2O = a ribonucleoside 5'-diphosphate + phosphate + H(+). Its function is as follows. Might be involved in RNA transport out of nuclei. In Pisum sativum (Garden pea), this protein is Nucleoside-triphosphatase.